The following is a 464-amino-acid chain: MNTLLVGINVAVMLILVGVLYYMQRKHVSFNKRVFTALGVGILFGLILQFIYEPTSKVIIESNTWFGLIGNGYVKLLQMIVMPLILVSIISAFTKLQLTKNLGKISGLIIGILILTTGIAAAVGIAASAGFDVSATGLQQGDAESARLKLVEERFTSIEKTTIPDKLLELLPTNPFLDLTGARPTSTISVVIFAAFIGIAFIGVKRKYPEQAELFKKMLDAVYAIVMRMVTLILRLTPYGVLALMAKTVAGSDINAILKLGNFVLASYVALIVMFIIHLLLIALSGLNPIQYLKKVFPVLTFAFTSRSSAGAMPLNIEAQKEKLGISEGIANFAASFGVSIGQNGCAGIYPAMLAMMVAPTVGIDPLQPQFILTLIAVVAISSFGVAGVGGGATFAALIVLSTMNLPIGIVALVISVEPLIDMGRTALNVSGSMTAGLISSKWLGELDQDTYNQDDTKTGEIAS.

Transmembrane regions (helical) follow at residues 3 to 23, 34 to 54, 73 to 93, 107 to 127, 184 to 204, 225 to 245, 263 to 283, 347 to 367, 371 to 391, and 395 to 415; these read TLLV…LYYM, VFTA…IYEP, YVKL…ISAF, GLII…GIAA, PTST…FIGV, IVMR…LALM, FVLA…LLIA, AGIY…IDPL, FILT…GVGG, and FAAL…ALVI.

It belongs to the dicarboxylate/amino acid:cation symporter (DAACS) (TC 2.A.23) family.

The protein localises to the membrane. In terms of biological role, mediates uptake of L-cystine, the oxidized form of L-cysteine. The polypeptide is L-cystine uptake protein TcyP (Bacillus cereus (strain ATCC 14579 / DSM 31 / CCUG 7414 / JCM 2152 / NBRC 15305 / NCIMB 9373 / NCTC 2599 / NRRL B-3711)).